Here is a 459-residue protein sequence, read N- to C-terminus: C-type lectin domain family 14 member A (459 aa).

The first 21 residues, 1-21 (MRPALALCLLCPAFWPRPGNG), serve as a signal peptide directing secretion. The Extracellular portion of the chain corresponds to 22–386 (EHPTADRAAC…VSLTFDTSST (365 aa)). The C-type lectin domain maps to 33-173 (ASGACYSLHH…LRTDGYLCKY (141 aa)). A disulfide bond links Cys143 and Cys162. N-linked (GlcNAc...) asparagine glycosylation is present at Asn189. The EGF-like domain occupies 246–288 (PCSGRYLLAGKCVELPDCLDHLGDFTCECAVGFELGKDGRSCE). N-linked (GlcNAc...) asparagine glycosylation is found at Asn306, Asn317, and Asn370. The helical transmembrane segment at 387-407 (VVFILVSIAVIVLVVLTITVL) threads the bilayer. Topologically, residues 408 to 459 (GLFKLCFHKSRSSRTGKGALDSPGVECDAEATSLHHSSTQCTDIGVKSGTVA) are cytoplasmic. Position 440 is a phosphoserine (Ser440).

Its subcellular location is the membrane. The protein is C-type lectin domain family 14 member A (Clec14a) of Mus musculus (Mouse).